Consider the following 207-residue polypeptide: Ras-related protein Rab-7a (207 aa).

Threonine 2 carries the N-acetylthreonine modification. Residues serine 17, glycine 18, valine 19, glycine 20, lysine 21, threonine 22, serine 23, serine 34, asparagine 35, tyrosine 37, and threonine 40 each contribute to the GTP site. Threonine 22 is a binding site for Mg(2+). A Switch 1 motif is present at residues 28–41 (YVNKKFSNQYKATI). The Mg(2+) site is built by threonine 40 and aspartate 63. Glycine 66 contributes to the GTP binding site. Residues 67–82 (QERFQSLGVAFYRGAD) carry the Switch 2 motif. Residue serine 72 is modified to Phosphoserine. Residues asparagine 125, lysine 126, aspartate 128, alanine 156, and lysine 157 each contribute to the GTP site. Residues lysine 191 and lysine 194 each participate in a glycyl lysine isopeptide (Lys-Gly) (interchain with G-Cter in ubiquitin) cross-link. Residues cysteine 205 and cysteine 207 are each lipidated (S-geranylgeranyl cysteine). Position 207 is a cysteine methyl ester (cysteine 207).

The protein belongs to the small GTPase superfamily. Rab family. As to quaternary structure, interacts with NTRK1/TRKA, RILP, PSMA7, RNF115 and FYCO1. Interacts with the PIK3C3/VPS34-PIK3R4 complex. The GTP-bound form interacts with OSBPL1A and RAC1. Interacts with CLN3. Interacts with CHM, the substrate-binding subunit of the Rab geranylgeranyltransferase complex. Interacts with C9orf72. Does not interact with HPS4 and the BLOC-3 complex (heterodimer of HPS1 and HPS4). Interacts with CLN5. Interacts with PLEKHM1 (via N- and C-terminus). Interacts with PRPH; the interaction is direct. Interacts with VPS13A. The GDP-bound form interacts with RIMOC1. Interacts with the MON1A-CCZ1B complex and this interaction is enhanced in the presence of RIMOC1. Interacts with VPS39 and VPS41. Forms a ternary complex with LAMP2 and RUFY4; the interaction with LAMP2 is mediated by RUFY4 (via RUN and coiled coil domains). Mg(2+) is required as a cofactor. In terms of processing, deubiquitination at Lys-191 and Lys-194 by USP32. Phosphorylated at Ser-72 by LRRK1; phosphorylation is dependent on protein kinase C (PKC) activation of LRRK1. Post-translationally, prenylated. Prenylation is required for association with cellular membranes. As to expression, widely expressed. High expression in liver, heart and kidney. Found in sensory and motor neurons.

The protein localises to the cytoplasmic vesicle. Its subcellular location is the phagosome membrane. The protein resides in the late endosome membrane. It localises to the lysosome membrane. It is found in the melanosome membrane. The protein localises to the autophagosome membrane. Its subcellular location is the lipid droplet. The protein resides in the endosome membrane. It localises to the mitochondrion membrane. It catalyses the reaction GTP + H2O = GDP + phosphate + H(+). With respect to regulation, regulated by guanine nucleotide exchange factors (GEFs) which promote the exchange of bound GDP for free GTP. Regulated by GTPase activating proteins (GAPs) which increase the GTP hydrolysis activity. Inhibited by GDP dissociation inhibitors (GDIs). Its function is as follows. The small GTPases Rab are key regulators of intracellular membrane trafficking, from the formation of transport vesicles to their fusion with membranes. Rabs cycle between an inactive GDP-bound form and an active GTP-bound form that is able to recruit to membranes different sets of downstream effectors directly responsible for vesicle formation, movement, tethering and fusion. In its active state, RAB7A binds to a variety of effector proteins playing a key role in the regulation of endo-lysosomal trafficking. Governs early-to-late endosomal maturation, microtubule minus-end as well as plus-end directed endosomal migration and positioning, and endosome-lysosome transport through different protein-protein interaction cascades. Also plays a central role in growth-factor-mediated cell signaling, nutrient-transporter-mediated nutrient uptake, neurotrophin transport in the axons of neurons and lipid metabolism. Also involved in regulation of some specialized endosomal membrane trafficking, such as maturation of melanosomes, pathogen-induced phagosomes (or vacuoles) and autophagosomes. Plays a role in the maturation and acidification of phagosomes that engulf pathogens, such as S.aureus and Mycobacteria. Plays a role in the fusion of phagosomes with lysosomes. In concert with RAC1, plays a role in regulating the formation of RBs (ruffled borders) in osteoclasts. Controls the endosomal trafficking and neurite outgrowth signaling of NTRK1/TRKA. Regulates the endocytic trafficking of the EGF-EGFR complex by regulating its lysosomal degradation. Involved in the ADRB2-stimulated lipolysis through lipophagy, a cytosolic lipase-independent autophagic pathway. Required for the exosomal release of SDCBP, CD63 and syndecan. Required for vesicular trafficking and cell surface expression of ACE2. May play a role in PRPH neuronal intermediate filament assembly. This is Ras-related protein Rab-7a from Mus musculus (Mouse).